Consider the following 181-residue polypeptide: Probable integrase/recombinase YoeC (181 aa).

In terms of domain architecture, Tyr recombinase spans 3-176 (IVQPIRSLEK…DEDTTRAAYK (174 aa)). Catalysis depends on residues Arg-40, Lys-64, His-128, Arg-131, and His-154. Catalysis depends on Tyr-163, which acts as the O-(3'-phospho-DNA)-tyrosine intermediate.

Belongs to the 'phage' integrase family.

The chain is Probable integrase/recombinase YoeC (yoeC) from Bacillus subtilis (strain 168).